The primary structure comprises 476 residues: GTPase Der (476 aa).

EngA-type G domains lie at 3-167 and 205-380; these read FTVA…GEER and LRVA…KVWN. Residues 9–16, 56–60, 119–122, 211–218, 258–262, and 323–326 contribute to the GTP site; these read GRPNVGKS, DTAGL, NKSE, GRPNAGKS, DTAGM, and NKWD. One can recognise a KH-like domain in the interval 381 to 465; sequence RRISTARLNR…PIRVHFRASE (85 aa).

Belongs to the TRAFAC class TrmE-Era-EngA-EngB-Septin-like GTPase superfamily. EngA (Der) GTPase family. In terms of assembly, associates with the 50S ribosomal subunit.

Its function is as follows. GTPase that plays an essential role in the late steps of ribosome biogenesis. This Rhizobium meliloti (strain 1021) (Ensifer meliloti) protein is GTPase Der.